The chain runs to 227 residues: Large ribosomal subunit protein uL10c (227 aa).

A chloroplast-targeting transit peptide spans 1-47 (MEATFFTLPSSTSHSYPFSLKSHFNNSLTLPTHPHFKPKSKNLTIRS).

It belongs to the universal ribosomal protein uL10 family. Part of the 50S ribosomal subunit.

It localises to the plastid. The protein resides in the chloroplast. In terms of biological role, this protein binds directly to 23S ribosomal RNA. This chain is Large ribosomal subunit protein uL10c (RPL10), found in Nicotiana tabacum (Common tobacco).